The following is a 352-amino-acid chain: Small ribosomal subunit biogenesis GTPase RsgA (352 aa).

Positions 109 to 277 (DTVLKRPDMY…LIDSPGIREF (169 aa)) constitute a CP-type G domain. GTP is bound by residues 165 to 168 (NKAD) and 219 to 227 (GQSGVGKSS). The Zn(2+) site is built by cysteine 301, cysteine 306, histidine 308, and cysteine 314.

It belongs to the TRAFAC class YlqF/YawG GTPase family. RsgA subfamily. Monomer. Associates with 30S ribosomal subunit, binds 16S rRNA. The cofactor is Zn(2+).

It localises to the cytoplasm. Its function is as follows. One of several proteins that assist in the late maturation steps of the functional core of the 30S ribosomal subunit. Helps release RbfA from mature subunits. May play a role in the assembly of ribosomal proteins into the subunit. Circularly permuted GTPase that catalyzes slow GTP hydrolysis, GTPase activity is stimulated by the 30S ribosomal subunit. The sequence is that of Small ribosomal subunit biogenesis GTPase RsgA from Alcanivorax borkumensis (strain ATCC 700651 / DSM 11573 / NCIMB 13689 / SK2).